Here is a 173-residue protein sequence, read N- to C-terminus: RNA pyrophosphohydrolase (173 aa).

In terms of domain architecture, Nudix hydrolase spans 13 to 166; the sequence is PYRPCVGLMI…KRKVYEEVVA (154 aa). Residues 54–75 carry the Nudix box motif; it reads GGIDKGEEPLQAAERELYEETG.

Belongs to the Nudix hydrolase family. RppH subfamily. A divalent metal cation is required as a cofactor.

Functionally, accelerates the degradation of transcripts by removing pyrophosphate from the 5'-end of triphosphorylated RNA, leading to a more labile monophosphorylated state that can stimulate subsequent ribonuclease cleavage. The polypeptide is RNA pyrophosphohydrolase (Mesorhizobium japonicum (strain LMG 29417 / CECT 9101 / MAFF 303099) (Mesorhizobium loti (strain MAFF 303099))).